Here is a 174-residue protein sequence, read N- to C-terminus: CDP-archaeol synthase (174 aa).

The next 4 membrane-spanning stretches (helical) occupy residues Leu-51 to Ile-71, Ser-74 to Gly-94, Met-112 to Leu-132, and Trp-136 to Phe-156.

The protein belongs to the CDP-archaeol synthase family. Requires Mg(2+) as cofactor.

The protein localises to the cell membrane. The enzyme catalyses 2,3-bis-O-(geranylgeranyl)-sn-glycerol 1-phosphate + CTP + H(+) = CDP-2,3-bis-O-(geranylgeranyl)-sn-glycerol + diphosphate. It functions in the pathway membrane lipid metabolism; glycerophospholipid metabolism. Functionally, catalyzes the formation of CDP-2,3-bis-(O-geranylgeranyl)-sn-glycerol (CDP-archaeol) from 2,3-bis-(O-geranylgeranyl)-sn-glycerol 1-phosphate (DGGGP) and CTP. This reaction is the third ether-bond-formation step in the biosynthesis of archaeal membrane lipids. In Methanocella arvoryzae (strain DSM 22066 / NBRC 105507 / MRE50), this protein is CDP-archaeol synthase.